Reading from the N-terminus, the 367-residue chain is Queuine tRNA-ribosyltransferase (367 aa).

Residue Asp-92 is the Proton acceptor of the active site. Substrate contacts are provided by residues 92-96, Asp-146, Gln-188, and Gly-215; that span reads DSGGF. The tract at residues 246-252 is RNA binding; that stretch reads GVGTPKD. Asp-265 acts as the Nucleophile in catalysis. Residues Cys-303, Cys-305, Cys-308, and His-334 each coordinate Zn(2+).

Belongs to the queuine tRNA-ribosyltransferase family. Homodimer. Within each dimer, one monomer is responsible for RNA recognition and catalysis, while the other monomer binds to the replacement base PreQ1. Requires Zn(2+) as cofactor.

It carries out the reaction 7-aminomethyl-7-carbaguanine + guanosine(34) in tRNA = 7-aminomethyl-7-carbaguanosine(34) in tRNA + guanine. Its pathway is tRNA modification; tRNA-queuosine biosynthesis. In terms of biological role, catalyzes the base-exchange of a guanine (G) residue with the queuine precursor 7-aminomethyl-7-deazaguanine (PreQ1) at position 34 (anticodon wobble position) in tRNAs with GU(N) anticodons (tRNA-Asp, -Asn, -His and -Tyr). Catalysis occurs through a double-displacement mechanism. The nucleophile active site attacks the C1' of nucleotide 34 to detach the guanine base from the RNA, forming a covalent enzyme-RNA intermediate. The proton acceptor active site deprotonates the incoming PreQ1, allowing a nucleophilic attack on the C1' of the ribose to form the product. After dissociation, two additional enzymatic reactions on the tRNA convert PreQ1 to queuine (Q), resulting in the hypermodified nucleoside queuosine (7-(((4,5-cis-dihydroxy-2-cyclopenten-1-yl)amino)methyl)-7-deazaguanosine). The sequence is that of Queuine tRNA-ribosyltransferase from Francisella tularensis subsp. tularensis (strain FSC 198).